Reading from the N-terminus, the 396-residue chain is Anhydro-N-acetylmuramic acid kinase (396 aa).

19–26 serves as a coordination point for ATP; that stretch reads GTSADGID.

It belongs to the anhydro-N-acetylmuramic acid kinase family.

It catalyses the reaction 1,6-anhydro-N-acetyl-beta-muramate + ATP + H2O = N-acetyl-D-muramate 6-phosphate + ADP + H(+). The protein operates within amino-sugar metabolism; 1,6-anhydro-N-acetylmuramate degradation. It functions in the pathway cell wall biogenesis; peptidoglycan recycling. Catalyzes the specific phosphorylation of 1,6-anhydro-N-acetylmuramic acid (anhMurNAc) with the simultaneous cleavage of the 1,6-anhydro ring, generating MurNAc-6-P. Is required for the utilization of anhMurNAc either imported from the medium or derived from its own cell wall murein, and thus plays a role in cell wall recycling. The polypeptide is Anhydro-N-acetylmuramic acid kinase (Colwellia psychrerythraea (strain 34H / ATCC BAA-681) (Vibrio psychroerythus)).